The chain runs to 309 residues: Ribonuclease Z (309 aa).

7 residues coordinate Zn(2+): His63, His65, Asp67, His68, His145, Asp216, and His274. Asp67 functions as the Proton acceptor in the catalytic mechanism.

It belongs to the RNase Z family. As to quaternary structure, homodimer. The cofactor is Zn(2+).

It carries out the reaction Endonucleolytic cleavage of RNA, removing extra 3' nucleotides from tRNA precursor, generating 3' termini of tRNAs. A 3'-hydroxy group is left at the tRNA terminus and a 5'-phosphoryl group is left at the trailer molecule.. Zinc phosphodiesterase, which displays some tRNA 3'-processing endonuclease activity. Probably involved in tRNA maturation, by removing a 3'-trailer from precursor tRNA. This is Ribonuclease Z from Streptococcus pyogenes serotype M1.